Here is a 179-residue protein sequence, read N- to C-terminus: UPF0227 protein SO_2251 (179 aa).

The protein belongs to the UPF0227 family.

The polypeptide is UPF0227 protein SO_2251 (Shewanella oneidensis (strain ATCC 700550 / JCM 31522 / CIP 106686 / LMG 19005 / NCIMB 14063 / MR-1)).